The chain runs to 105 residues: Oxytocin-neurophysin 1 (105 aa).

Cys-1 and Cys-6 are disulfide-bonded. Glycine amide is present on Gly-9. 7 cysteine pairs are disulfide-bonded: Cys-22-Cys-66, Cys-25-Cys-39, Cys-33-Cys-56, Cys-40-Cys-46, Cys-73-Cys-85, Cys-79-Cys-97, and Cys-86-Cys-91.

This sequence belongs to the vasopressin/oxytocin family. In terms of assembly, interacts with oxytocin receptor (Ki=1.5 nM). Interacts with vasopressin V1aR/AVPR1A (Ki=37 nM), V1bR/AVPR1B (Ki=222 nM), and V2R/AVPR2 receptors (Ki=823 nM).

The protein localises to the secreted. Neurophysin 1 specifically binds oxytocin. Functionally, oxytocin causes contraction of the smooth muscle of the uterus and of the mammary gland. Acts by binding to oxytocin receptor (OXTR). In Equus caballus (Horse), this protein is Oxytocin-neurophysin 1 (OXT).